The sequence spans 94 residues: DNA-directed RNA polymerase subunit omega (94 aa).

This sequence belongs to the RNA polymerase subunit omega family. The RNAP catalytic core consists of 2 alpha, 1 beta, 1 beta' and 1 omega subunit. When a sigma factor is associated with the core the holoenzyme is formed, which can initiate transcription.

The catalysed reaction is RNA(n) + a ribonucleoside 5'-triphosphate = RNA(n+1) + diphosphate. Promotes RNA polymerase assembly. Latches the N- and C-terminal regions of the beta' subunit thereby facilitating its interaction with the beta and alpha subunits. The chain is DNA-directed RNA polymerase subunit omega from Tolumonas auensis (strain DSM 9187 / NBRC 110442 / TA 4).